Here is a 196-residue protein sequence, read N- to C-terminus: Pyridoxine/pyridoxamine 5'-phosphate oxidase (196 aa).

Lysine 49 lines the substrate pocket. 2 residues coordinate FMN: lysine 66 and glutamine 88. Residues tyrosine 106, arginine 110, and serine 114 each coordinate substrate. FMN contacts are provided by residues 123 to 124 (QS) and tryptophan 168. A substrate-binding site is contributed by 174–176 (RLH). Residue arginine 178 participates in FMN binding.

The protein belongs to the pyridoxamine 5'-phosphate oxidase family. In terms of assembly, homodimer. It depends on FMN as a cofactor.

The catalysed reaction is pyridoxamine 5'-phosphate + O2 + H2O = pyridoxal 5'-phosphate + H2O2 + NH4(+). The enzyme catalyses pyridoxine 5'-phosphate + O2 = pyridoxal 5'-phosphate + H2O2. It participates in cofactor metabolism; pyridoxal 5'-phosphate salvage; pyridoxal 5'-phosphate from pyridoxamine 5'-phosphate: step 1/1. Its pathway is cofactor metabolism; pyridoxal 5'-phosphate salvage; pyridoxal 5'-phosphate from pyridoxine 5'-phosphate: step 1/1. Functionally, catalyzes the oxidation of either pyridoxine 5'-phosphate (PNP) or pyridoxamine 5'-phosphate (PMP) into pyridoxal 5'-phosphate (PLP). This is Pyridoxine/pyridoxamine 5'-phosphate oxidase from Bdellovibrio bacteriovorus (strain ATCC 15356 / DSM 50701 / NCIMB 9529 / HD100).